The sequence spans 448 residues: Vacuolar amino acid transporter 6 (448 aa).

Topologically, residues 1 to 7 are cytoplasmic; the sequence is MVASIRS. A helical transmembrane segment spans residues 8 to 28; the sequence is GVLTLLHTACGAGILAMPYAF. Topologically, residues 29 to 32 are vacuolar; the sequence is KPFG. A helical membrane pass occupies residues 33 to 53; that stretch reads LIPGVIMIVLCGACAMQSLFI. The Cytoplasmic segment spans residues 54–80; sequence QARVAKYVPQGRASFSALTRLINPNLG. A helical membrane pass occupies residues 81–101; sequence IVFDLAIAIKCFGVGVSYMIV. At 102–125 the chain is on the vacuolar side; that stretch reads VGDLMPQIMSVWTRNAWLLNRNVQ. The helical transmembrane segment at 126 to 146 threads the bilayer; it reads ISLIMLFFVAPLSFLKKLNSL. Topologically, residues 147–150 are cytoplasmic; sequence RYAS. A helical membrane pass occupies residues 151–171; sequence MVAISSVAYLCVLVLLHYVAP. Residues 172-195 are Vacuolar-facing; that stretch reads SDEILRLKGRISYLLPPQSHDLNV. A helical membrane pass occupies residues 196–216; it reads LNTLPIFVFAYTCHHNMFSII. Residues 217–229 lie on the Cytoplasmic side of the membrane; that stretch reads NEQRSSRFEHVMK. A helical transmembrane segment spans residues 230–250; it reads IPLIAISLALILYIAIGCAGY. Residues 251–267 are Vacuolar-facing; it reads LTFGDNIIGNIIMLYPQ. Residues 268-288 traverse the membrane as a helical segment; that stretch reads AVSSTIGRIAIVLLVMLAFPL. Residues 289–357 are Cytoplasmic-facing; the sequence is QCHPARASIH…PKETPLRGKS (69 aa). The residue at position 344 (serine 344) is a Phosphoserine. A helical transmembrane segment spans residues 358-378; that stretch reads FIVITCSILVASYLVAISVSS. Topologically, residues 379-381 are vacuolar; the sequence is LAR. A helical transmembrane segment spans residues 382 to 402; it reads VLAIVGATGSTSISFILPGLF. Residues 403–424 are Cytoplasmic-facing; the sequence is GYKLIGTEHKTAVPLTTKIFKY. The helical transmembrane segment at 425–445 threads the bilayer; it reads TGLLLFIWGLIIMITCLTAAL. The Vacuolar segment spans residues 446 to 448; sequence KLN.

It belongs to the amino acid/polyamine transporter 2 family.

Its subcellular location is the vacuole membrane. Functionally, involved in amino acid efflux from the vacuole to the cytoplasm. Capable of transporting aspartate and glutamate. Requires ATP for function. This chain is Vacuolar amino acid transporter 6 (AVT6), found in Saccharomyces cerevisiae (strain ATCC 204508 / S288c) (Baker's yeast).